A 100-amino-acid polypeptide reads, in one-letter code: NADH-quinone oxidoreductase subunit K (100 aa).

Helical transmembrane passes span 4–24 (LQHGLILAAILFVLGLTGLVI), 28–48 (LLFMLIGLEIMINAAALAFVV), and 60–80 (IMYILAISLAAAEASIGLALL).

It belongs to the complex I subunit 4L family. In terms of assembly, NDH-1 is composed of 13 different subunits. Subunits NuoA, H, J, K, L, M, N constitute the membrane sector of the complex.

The protein resides in the cell inner membrane. It carries out the reaction a quinone + NADH + 5 H(+)(in) = a quinol + NAD(+) + 4 H(+)(out). In terms of biological role, NDH-1 shuttles electrons from NADH, via FMN and iron-sulfur (Fe-S) centers, to quinones in the respiratory chain. The immediate electron acceptor for the enzyme in this species is believed to be ubiquinone. Couples the redox reaction to proton translocation (for every two electrons transferred, four hydrogen ions are translocated across the cytoplasmic membrane), and thus conserves the redox energy in a proton gradient. The sequence is that of NADH-quinone oxidoreductase subunit K from Cronobacter sakazakii (strain ATCC BAA-894) (Enterobacter sakazakii).